We begin with the raw amino-acid sequence, 203 residues long: Na(+)-translocating NADH-quinone reductase subunit E (203 aa).

A run of 6 helical transmembrane segments spans residues 11-31 (SIFI…FLAV), 35-55 (ISTA…TVPL), 82-102 (FLGL…LEMF), 115-135 (GIFL…LFMV), 145-165 (MVYG…MAGV), and 181-201 (LGIT…FSGI).

Belongs to the NqrDE/RnfAE family. As to quaternary structure, composed of six subunits; NqrA, NqrB, NqrC, NqrD, NqrE and NqrF.

The protein resides in the cell inner membrane. It carries out the reaction a ubiquinone + n Na(+)(in) + NADH + H(+) = a ubiquinol + n Na(+)(out) + NAD(+). Functionally, NQR complex catalyzes the reduction of ubiquinone-1 to ubiquinol by two successive reactions, coupled with the transport of Na(+) ions from the cytoplasm to the periplasm. NqrA to NqrE are probably involved in the second step, the conversion of ubisemiquinone to ubiquinol. The sequence is that of Na(+)-translocating NADH-quinone reductase subunit E from Dichelobacter nodosus (strain VCS1703A).